The following is a 523-amino-acid chain: MAKGEGAEQYTNTSLLQKPSPDEVKLAKHETKSRLSVCSKLCYAIGGAPYQITGCAIGFFLQIYLLDVALLDPFYASIILFVGRAWDAVTDPTVGFLVSRTPWTRFGRMMPWIVLSTPFAVLCYFLIWYVPSVDQGKVVWYLIFYCCFQTLQTCFHVPYSALTMFISTEQKERDSATAYRMTVEVLGTLIGTAIQGQIVGMANAPCISTEIDLNSTGLEVAPDVNITDPHVSLQDLRNAYMIASGVICAIYVVCAVVLFLGVKEQKDTCRVRTEPMSFFQGICMVMGHGPYAKLVMGFLFTSLAFMLLEGNFALFCIYNLGFRNDFQNVLLVIMLSATLAIPFWQWFLTKFGKKTAVYIGTTSVVPFLISVVLVPSSLAVTYIASFAAGVSVAAAFLLPWSMLPDVVDDFKVQNPESQGHEAIFYSFYVFFTKFASGVSLGVSTLSLDFAGYVTRGCTQPGEVKLTLKILVSAAPIVLIIIGLLIFISYPINEEKRQGNRKLLNEQRENEMDSETDSTELNVV.

Over 1 to 34 the chain is Cytoplasmic; that stretch reads MAKGEGAEQYTNTSLLQKPSPDEVKLAKHETKSR. Residues 35–64 traverse the membrane as a helical segment; that stretch reads LSVCSKLCYAIGGAPYQITGCAIGFFLQIY. Over 65–75 the chain is Extracellular; that stretch reads LLDVALLDPFY. The helical transmembrane segment at 76–96 threads the bilayer; that stretch reads ASIILFVGRAWDAVTDPTVGF. Residues 97–108 are Cytoplasmic-facing; it reads LVSRTPWTRFGR. Residues 109-128 traverse the membrane as a helical segment; it reads MMPWIVLSTPFAVLCYFLIW. The Extracellular segment spans residues 129-138; the sequence is YVPSVDQGKV. The chain crosses the membrane as a helical span at residues 139-163; it reads VWYLIFYCCFQTLQTCFHVPYSALT. The Cytoplasmic portion of the chain corresponds to 164–170; that stretch reads MFISTEQ. A helical membrane pass occupies residues 171 to 202; it reads KERDSATAYRMTVEVLGTLIGTAIQGQIVGMA. Residues 203-226 lie on the Extracellular side of the membrane; it reads NAPCISTEIDLNSTGLEVAPDVNI. Residues Cys-206 and Cys-457 are joined by a disulfide bond. 2 N-linked (GlcNAc...) asparagine glycosylation sites follow: Asn-214 and Asn-225. The helical transmembrane segment at 227–260 threads the bilayer; the sequence is TDPHVSLQDLRNAYMIASGVICAIYVVCAVVLFL. Residues 261 to 290 are Cytoplasmic-facing; that stretch reads GVKEQKDTCRVRTEPMSFFQGICMVMGHGP. Residues 291–317 traverse the membrane as a helical segment; the sequence is YAKLVMGFLFTSLAFMLLEGNFALFCI. The Extracellular segment spans residues 318 to 328; that stretch reads YNLGFRNDFQN. A helical membrane pass occupies residues 329-347; it reads VLLVIMLSATLAIPFWQWF. The Cytoplasmic portion of the chain corresponds to 348-351; that stretch reads LTKF. Residues 352 to 373 form a helical membrane-spanning segment; the sequence is GKKTAVYIGTTSVVPFLISVVL. At 374–376 the chain is on the extracellular side; that stretch reads VPS. The chain crosses the membrane as a helical span at residues 377–413; that stretch reads SLAVTYIASFAAGVSVAAAFLLPWSMLPDVVDDFKVQ. The Cytoplasmic segment spans residues 414-423; the sequence is NPESQGHEAI. The helical transmembrane segment at 424–450 threads the bilayer; it reads FYSFYVFFTKFASGVSLGVSTLSLDFA. Topologically, residues 451-462 are extracellular; sequence GYVTRGCTQPGE. Residues 463 to 486 traverse the membrane as a helical segment; the sequence is VKLTLKILVSAAPIVLIIIGLLIF. At 487 to 523 the chain is on the cytoplasmic side; sequence ISYPINEEKRQGNRKLLNEQRENEMDSETDSTELNVV. The interval 504 to 523 is disordered; that stretch reads NEQRENEMDSETDSTELNVV.

It belongs to the major facilitator superfamily. Expressed in the developing nervous system.

The protein localises to the cell membrane. It localises to the endoplasmic reticulum membrane. The enzyme catalyses a 1-acyl-sn-glycero-3-phosphocholine(in) + Na(+)(in) = a 1-acyl-sn-glycero-3-phosphocholine(out) + Na(+)(out). It carries out the reaction 1-(4Z,7Z,10Z,13Z,16Z,19Z-docosahexaenoyl)-sn-glycero-3-phosphocholine(in) + Na(+)(in) = 1-(4Z,7Z,10Z,13Z,16Z,19Z-docosahexaenoyl)-sn-glycero-3-phosphocholine(out) + Na(+)(out). It catalyses the reaction 1-(9Z-octadecenoyl)-sn-glycero-3-phosphocholine(in) + Na(+)(in) = 1-(9Z-octadecenoyl)-sn-glycero-3-phosphocholine(out) + Na(+)(out). The catalysed reaction is 1-hexadecanoyl-sn-glycero-3-phosphocholine(in) + Na(+)(in) = 1-hexadecanoyl-sn-glycero-3-phosphocholine(out) + Na(+)(out). The enzyme catalyses a 1-acyl-sn-glycero-3-phosphoethanolamine(in) + Na(+)(in) = a 1-acyl-sn-glycero-3-phosphoethanolamine(out) + Na(+)(out). Functionally, sodium-dependent lysophosphatidylcholine (LPC) symporter, which plays an essential role for blood-brain barrier formation and function. Specifically expressed in endothelium of the blood-brain barrier of micro-vessels and transports LPC into the brain. Transport of LPC is essential because it constitutes the major mechanism by which docosahexaenoic acid (DHA), an omega-3 fatty acid that is essential for normal brain growth and cognitive function, enters the brain. Transports LPC carrying long-chain fatty acids such LPC oleate and LPC palmitate with a minimum acyl chain length of 14 carbons. Does not transport docosahexaenoic acid in unesterified fatty acid. This Danio rerio (Zebrafish) protein is Sodium-dependent lysophosphatidylcholine symporter 1-B (mfsd2ab).